The chain runs to 727 residues: Broad-complex core protein isoforms 1/2/3/4/5 (727 aa).

The BTB domain maps to 32-97 (VDVTLACEGR…IYHGEVNVHQ (66 aa)). The segment covering 135-149 (NSGGRTPLNTHTQSL) has biased composition (polar residues). 5 disordered regions span residues 135–185 (NSGG…SLPS), 218–378 (RGSD…IGDG), 445–496 (INNS…RPTA), 532–583 (PQQQ…ANTP), and 604–626 (STSG…SGGL). Residues 227–238 (SGAVGSGSNNNS) are compositionally biased toward low complexity. Residues 281–298 (TGNGNSGNGNGNGNGASN) show a composition bias toward gly residues. Basic and acidic residues predominate over residues 341–355 (NDEHSNDSTGEHDAN). Low complexity-rich tracts occupy residues 445–460 (INNS…NNNN), 475–495 (TPSP…TRPT), and 533–568 (QQQQ…QQQQ). 2 C2H2-type zinc fingers span residues 636–659 (FRCN…QNVH) and 666–689 (PVCN…SIYH). Residues 694–727 (QPKQEPGVGATQAAANSFYHQQHQQQQLNHHSSS) are disordered. A compositionally biased stretch (low complexity) spans 713-727 (HQQHQQQQLNHHSSS).

Its subcellular location is the nucleus. Broad-complex proteins are required for puffing and transcription of salivary gland late genes during metamorphosis. The polypeptide is Broad-complex core protein isoforms 1/2/3/4/5 (br) (Drosophila melanogaster (Fruit fly)).